The chain runs to 109 residues: Glutaredoxin 4 (109 aa).

The Glutaredoxin domain occupies 4–106 (LDKIKKQISE…TLLADVAAKY (103 aa)). A glutathione-binding site is contributed by K21. C29 is a [2Fe-2S] cluster binding site. Residues R58, F70, and 83-84 (CD) each bind glutathione.

It belongs to the glutaredoxin family. Monothiol subfamily. In terms of assembly, homodimer.

The protein localises to the cytoplasm. Its function is as follows. Monothiol glutaredoxin involved in the biogenesis of iron-sulfur clusters. The polypeptide is Glutaredoxin 4 (grxD) (Pasteurella multocida (strain Pm70)).